A 400-amino-acid polypeptide reads, in one-letter code: Axin-like protein 1 (400 aa).

The RGS domain maps to 4–132; sequence RSKFSIDRVL…TTTADVNTTW (129 aa). Disordered stretches follow at residues 190-233 and 278-306; these read QETK…TLKV and GTLE…GSEA. A compositionally biased stretch (basic and acidic residues) spans 194-210; that stretch reads NSSETEEHAESPRKEKS. Residues 287–298 show a composition bias toward polar residues; the sequence is FTGTNNGFSTLQ. In terms of domain architecture, DIX spans 305–392; that stretch reads EAPKMTVELR…RITAICRMCP (88 aa).

Interacts with bar-1, dsh-2, gsk-3, and mig-5.

Its function is as follows. Works in parallel with pry-1 in negatively regulating bar-1 signaling in vulval precursor cells and Q neuroblasts. Shown to have a role in excretory cell development. The chain is Axin-like protein 1 from Caenorhabditis elegans.